Consider the following 374-residue polypeptide: MEVYSGQMGENPHSRGLEMDAEGSRDKSISSPREIGDQVSVDCMDIIKGRLDEISRPASSSSLSENRRKSAEGHRSLEVLSPDLNHTLFQRSIHEMTDQTTETSSDHEDSEEENEDPEMRKAIRKMKKLDRILAHKVSAEREVKQKGRELHQRLWQELQAESLHISSTEAENTRRFLSLTPSDCLECDEEDVFVPVFETEVVDLKTEVNSRPEPEECVEAAGHAEVGQEVTEDRRHTGASHSKSRHDFVKKNIELAGASGSSVFLTQQEKERIEDLLKDLEEELLEEPQLVLSSLSAGQGFSPEPSERHTLFNIDSRLQLLLPMQDFLSVRSSSSQGSLEESTGDQGLWTMRQRRDEERRLREIQEQLQILEET.

Disordered regions lie at residues 1 to 80 (MEVY…LEVL), 95 to 120 (EMTD…PEMR), and 225 to 244 (EVGQ…HSKS). Composition is skewed to basic and acidic residues over residues 12-28 (PHSR…RDKS), 45-55 (DIIKGRLDEIS), and 65-77 (ENRR…HRSL). Residues 262-290 (SVFLTQQEKERIEDLLKDLEEELLEEPQL) adopt a coiled-coil conformation.

It belongs to the FSIP1 family.

In Danio rerio (Zebrafish), this protein is Fibrous sheath-interacting protein 1 (fsip1).